Reading from the N-terminus, the 116-residue chain is MPNYRGGRINEEFKREISNIIQNEIKDPRLTAMISVTDVKVTKDLKYAKVYVSIFSTKEEEKKDNFTALKSASGFIRKILGQRINVRHNPEILFELDDSINYAMHIDELIQKVKDK.

Belongs to the RbfA family. In terms of assembly, monomer. Binds 30S ribosomal subunits, but not 50S ribosomal subunits or 70S ribosomes.

It is found in the cytoplasm. Its function is as follows. One of several proteins that assist in the late maturation steps of the functional core of the 30S ribosomal subunit. Associates with free 30S ribosomal subunits (but not with 30S subunits that are part of 70S ribosomes or polysomes). Required for efficient processing of 16S rRNA. May interact with the 5'-terminal helix region of 16S rRNA. In Clostridium botulinum (strain Eklund 17B / Type B), this protein is Ribosome-binding factor A.